Reading from the N-terminus, the 138-residue chain is Small ribosomal subunit protein uS12 (138 aa).

Residues 33 to 55 (KEHTNVSSPQKRGVCTRVGTMTP) are disordered. Aspartate 102 is subject to 3-methylthioaspartic acid.

Belongs to the universal ribosomal protein uS12 family. As to quaternary structure, part of the 30S ribosomal subunit. Contacts proteins S8 and S17. May interact with IF1 in the 30S initiation complex.

Functionally, with S4 and S5 plays an important role in translational accuracy. In terms of biological role, interacts with and stabilizes bases of the 16S rRNA that are involved in tRNA selection in the A site and with the mRNA backbone. Located at the interface of the 30S and 50S subunits, it traverses the body of the 30S subunit contacting proteins on the other side and probably holding the rRNA structure together. The combined cluster of proteins S8, S12 and S17 appears to hold together the shoulder and platform of the 30S subunit. This chain is Small ribosomal subunit protein uS12, found in Bacillus licheniformis (strain ATCC 14580 / DSM 13 / JCM 2505 / CCUG 7422 / NBRC 12200 / NCIMB 9375 / NCTC 10341 / NRRL NRS-1264 / Gibson 46).